A 690-amino-acid polypeptide reads, in one-letter code: Glycine--tRNA ligase beta subunit (690 aa).

It belongs to the class-II aminoacyl-tRNA synthetase family. In terms of assembly, tetramer of two alpha and two beta subunits.

It localises to the cytoplasm. The catalysed reaction is tRNA(Gly) + glycine + ATP = glycyl-tRNA(Gly) + AMP + diphosphate. The chain is Glycine--tRNA ligase beta subunit from Proteus mirabilis (strain HI4320).